Consider the following 493-residue polypeptide: Probable malate:quinone oxidoreductase (493 aa).

It belongs to the MQO family. Requires FAD as cofactor.

The catalysed reaction is (S)-malate + a quinone = a quinol + oxaloacetate. Its pathway is carbohydrate metabolism; tricarboxylic acid cycle; oxaloacetate from (S)-malate (quinone route): step 1/1. This chain is Probable malate:quinone oxidoreductase, found in Lysinibacillus sphaericus (strain C3-41).